The sequence spans 55 residues: Large ribosomal subunit protein bL33 (55 aa).

The protein belongs to the bacterial ribosomal protein bL33 family.

The sequence is that of Large ribosomal subunit protein bL33 from Edwardsiella ictaluri (strain 93-146).